The following is a 381-amino-acid chain: Chaperone protein DnaJ (381 aa).

Residues 5–70 (DYYEVLGLQK…QKRAAYDQYG (66 aa)) enclose the J domain. The segment at 133-211 (GTTKDIQINT…CHGEGRVHKK (79 aa)) adopts a CR-type zinc-finger fold. Zn(2+) contacts are provided by Cys146, Cys149, Cys163, Cys166, Cys185, Cys188, Cys199, and Cys202. CXXCXGXG motif repeat units lie at residues 146-153 (CDSCGGSG), 163-170 (CPHCHGSG), 185-192 (CPTCHGSG), and 199-206 (CRSCHGEG).

Belongs to the DnaJ family. As to quaternary structure, homodimer. It depends on Zn(2+) as a cofactor.

It is found in the cytoplasm. Functionally, participates actively in the response to hyperosmotic and heat shock by preventing the aggregation of stress-denatured proteins and by disaggregating proteins, also in an autonomous, DnaK-independent fashion. Unfolded proteins bind initially to DnaJ; upon interaction with the DnaJ-bound protein, DnaK hydrolyzes its bound ATP, resulting in the formation of a stable complex. GrpE releases ADP from DnaK; ATP binding to DnaK triggers the release of the substrate protein, thus completing the reaction cycle. Several rounds of ATP-dependent interactions between DnaJ, DnaK and GrpE are required for fully efficient folding. Also involved, together with DnaK and GrpE, in the DNA replication of plasmids through activation of initiation proteins. In Haemophilus influenzae (strain 86-028NP), this protein is Chaperone protein DnaJ.